The sequence spans 612 residues: uncharacterized protein (612 aa).

Transmembrane regions (helical) follow at residues I13–P33, A38–A58, T67–I87, G107–L127, L144–S164, and L189–L209. 2 RCK C-terminal domains span residues G218–I302 and N316–L403. Helical transmembrane passes span A419–V439, I459–T479, L501–L521, A525–P545, L546–Y566, and I586–Y606.

This sequence belongs to the SLC13A/DASS transporter (TC 2.A.47) family. NADC subfamily.

The protein resides in the cell membrane. This is an uncharacterized protein from Synechocystis sp. (strain ATCC 27184 / PCC 6803 / Kazusa).